A 533-amino-acid polypeptide reads, in one-letter code: Nuclear receptor corepressor 1 (533 aa).

A compositionally biased stretch (basic and acidic residues) spans 1–17 (KDKGPPPKSRYEEELRT). The segment at 1–21 (KDKGPPPKSRYEEELRTRGKT) is disordered. The CORNR box 1 motif lies at 29-33 (IDVII). A disordered region spans residues 37-144 (IASDKDARER…EGMGQVPRTH (108 aa)). Residues 38-47 (ASDKDARERG) show a composition bias toward basic and acidic residues. Residues 48 to 59 (SQSSDSSSSLSS) are compositionally biased toward low complexity. Ser73 and Ser77 each carry phosphoserine. The ID1 stretch occupies residues 130–209 (PSSQAEGMGQ…QSQTVLHPRP (80 aa)). The interval 145–148 (RLIT) is required for interaction with RARA in the absence of its ligand. The CORNR box 2 motif lies at 153–157 (ICQII). Residues 165–180 (QVPSQPSTSTFQTSPS) are compositionally biased toward low complexity. Residues 165 to 254 (QVPSQPSTST…SPPQGPAVHE (90 aa)) form a disordered region. A compositionally biased stretch (polar residues) spans 181 to 204 (ALSSTPVRTKPSSRYSPESQSQTV). Ser196, Ser214, Ser230, Ser245, and Ser278 each carry phosphoserine. Basic and acidic residues predominate over residues 218-236 (LVDKSRGSRPGKSPERSHI). The interval 306–367 (IFRKLNSSGG…EDIIRKALMG (62 aa)) is ID2. Positions 357 to 361 (LEDII) match the CORNR box 3 motif. Over residues 382 to 399 (HPVGVVPGSASTSVVTSS) the composition is skewed to low complexity. The interval 382–476 (HPVGVVPGSA…RPSSTGSTQF (95 aa)) is disordered. The residue at position 492 (Thr492) is a Phosphothreonine. Residues Ser529 and Ser531 each carry the phosphoserine modification.

The protein belongs to the N-CoR nuclear receptor corepressors family. Forms a large corepressor complex that contains SIN3A/B and histone deacetylases HDAC1 and HDAC2. This complex associates with the thyroid receptor (TR) and the retinoid acid receptor (RAR) in the absence of ligand. Interacts directly with RARA; the interaction is facilitated with RARA trimethylation. Component of the N-Cor repressor complex, at least composed of CBFA2T3, HEXIM1, NCOR1, NCOR2, HDAC3, TBL1X, TBL1XR1, CORO2A and GPS2. Interacts with ZBTB33; the interaction serves to recruit the N-CoR complex to promoter regions containing methylated CpG dinucleotides. Interacts with TRIM28 and KDM3A. Interacts (via the RD1 domain) with BAZ1A (via its N-terminal); the interaction corepresses a number of NCOR1-regulated genes. Interacts with BCL6, C1D, DACH1, HEXIM1, HDAC7, RORA, RORC, SAP30, SIAH2, SIN3A and SIN3B. May interact with DEAF1. Interacts with RXRA. Interacts with SETD5. Interacts with VDR. Interacts with ZBTB7A. Interacts with AR. Interacts with HDAC3. In terms of processing, ubiquitinated; mediated by SIAH2 and leading to its subsequent proteasomal degradation.

The protein localises to the nucleus. In terms of biological role, mediates transcriptional repression by certain nuclear receptors. Part of a complex which promotes histone deacetylation and the formation of repressive chromatin structures which may impede the access of basal transcription factors. Participates in the transcriptional repressor activity produced by BCL6. Recruited by ZBTB7A to the androgen response elements/ARE on target genes, negatively regulates androgen receptor signaling and androgen-induced cell proliferation. Mediates the NR1D1-dependent repression and circadian regulation of TSHB expression. The NCOR1-HDAC3 complex regulates the circadian expression of the core clock gene ARTNL/BMAL1 and the genes involved in lipid metabolism in the liver. This Rattus norvegicus (Rat) protein is Nuclear receptor corepressor 1 (Ncor1).